The following is a 384-amino-acid chain: Mannitol-1-phosphate 5-dehydrogenase (384 aa).

An NAD(+)-binding site is contributed by 3 to 14; it reads ALHFGAGNIGRG.

Belongs to the mannitol dehydrogenase family.

It carries out the reaction D-mannitol 1-phosphate + NAD(+) = beta-D-fructose 6-phosphate + NADH + H(+). This Clostridium acetobutylicum (strain ATCC 824 / DSM 792 / JCM 1419 / IAM 19013 / LMG 5710 / NBRC 13948 / NRRL B-527 / VKM B-1787 / 2291 / W) protein is Mannitol-1-phosphate 5-dehydrogenase (mtlD).